Here is an 88-residue protein sequence, read N- to C-terminus: Apolipoprotein C-I (88 aa).

An N-terminal signal peptide occupies residues 1–26; sequence MRLFISLPILIVVLAMALEGPAPAQA.

The protein belongs to the apolipoprotein C1 family.

The protein resides in the secreted. Inhibitor of lipoprotein binding to the low density lipoprotein (LDL) receptor, LDL receptor-related protein, and very low density lipoprotein (VLDL) receptor. Associates with high density lipoproteins (HDL) and the triacylglycerol-rich lipoproteins in the plasma and makes up about 10% of the protein of the VLDL and 2% of that of HDL. Appears to interfere directly with fatty acid uptake and is also the major plasma inhibitor of cholesteryl ester transfer protein (CETP). Modulates the interaction of APOE with beta-migrating VLDL and inhibits binding of beta-VLDL to the LDL receptor-related protein. Binds free fatty acids and reduces their intracellular esterification. The sequence is that of Apolipoprotein C-I (Apoc1) from Neotoma lepida (Desert woodrat).